A 64-amino-acid polypeptide reads, in one-letter code: Large ribosomal subunit protein uL29 (64 aa).

The protein belongs to the universal ribosomal protein uL29 family.

The sequence is that of Large ribosomal subunit protein uL29 from Thiobacillus denitrificans (strain ATCC 25259 / T1).